An 81-amino-acid polypeptide reads, in one-letter code: Sulfur carrier protein TusA (81 aa).

The active-site Cysteine persulfide intermediate is the Cys19.

It belongs to the sulfur carrier protein TusA family.

It localises to the cytoplasm. Functionally, sulfur carrier protein which probably makes part of a sulfur-relay system. The protein is Sulfur carrier protein TusA of Shewanella woodyi (strain ATCC 51908 / MS32).